Here is a 295-residue protein sequence, read N- to C-terminus: Phosphonoacetaldehyde hydrolase (295 aa).

Catalysis depends on Asp36, which acts as the Nucleophile. Mg(2+) contacts are provided by Asp36 and Ala38. Catalysis depends on Lys78, which acts as the Schiff-base intermediate with substrate. Asp212 contacts Mg(2+).

This sequence belongs to the HAD-like hydrolase superfamily. PhnX family. Homodimer. The cofactor is Mg(2+).

It catalyses the reaction phosphonoacetaldehyde + H2O = acetaldehyde + phosphate + H(+). Its function is as follows. Involved in phosphonate degradation. In Psychromonas ingrahamii (strain DSM 17664 / CCUG 51855 / 37), this protein is Phosphonoacetaldehyde hydrolase.